The chain runs to 373 residues: Chaperone protein DnaJ (373 aa).

The J domain maps to 5-70 (DYYELLEVDR…EKRALYDQYG (66 aa)). The CR-type zinc finger occupies 134 to 211 (GTQKEVHYSF…CSGKGYRIEK (78 aa)). Residues C147, C150, C163, C166, C185, C188, C199, and C202 each contribute to the Zn(2+) site. CXXCXGXG motif repeat units follow at residues 147-154 (CSACKGTG), 163-170 (CPECHGRG), 185-192 (CPRCHGQG), and 199-206 (CEECSGKG).

This sequence belongs to the DnaJ family. In terms of assembly, homodimer. Zn(2+) is required as a cofactor.

Its subcellular location is the cytoplasm. Its function is as follows. Participates actively in the response to hyperosmotic and heat shock by preventing the aggregation of stress-denatured proteins and by disaggregating proteins, also in an autonomous, DnaK-independent fashion. Unfolded proteins bind initially to DnaJ; upon interaction with the DnaJ-bound protein, DnaK hydrolyzes its bound ATP, resulting in the formation of a stable complex. GrpE releases ADP from DnaK; ATP binding to DnaK triggers the release of the substrate protein, thus completing the reaction cycle. Several rounds of ATP-dependent interactions between DnaJ, DnaK and GrpE are required for fully efficient folding. Also involved, together with DnaK and GrpE, in the DNA replication of plasmids through activation of initiation proteins. The polypeptide is Chaperone protein DnaJ (Nitratiruptor sp. (strain SB155-2)).